A 417-amino-acid chain; its full sequence is Glutamyl-tRNA(Gln) amidotransferase subunit D (417 aa).

The Asparaginase/glutaminase domain occupies 73-400; that stretch reads EKVWLLATGG…EEVPRVLTTP (328 aa). Residues threonine 83, threonine 157, aspartate 158, and lysine 236 contribute to the active site.

It belongs to the asparaginase 1 family. GatD subfamily. Heterodimer of GatD and GatE.

It catalyses the reaction L-glutamyl-tRNA(Gln) + L-glutamine + ATP + H2O = L-glutaminyl-tRNA(Gln) + L-glutamate + ADP + phosphate + H(+). Functionally, allows the formation of correctly charged Gln-tRNA(Gln) through the transamidation of misacylated Glu-tRNA(Gln) in organisms which lack glutaminyl-tRNA synthetase. The reaction takes place in the presence of glutamine and ATP through an activated gamma-phospho-Glu-tRNA(Gln). The GatDE system is specific for glutamate and does not act on aspartate. The chain is Glutamyl-tRNA(Gln) amidotransferase subunit D from Pyrobaculum aerophilum (strain ATCC 51768 / DSM 7523 / JCM 9630 / CIP 104966 / NBRC 100827 / IM2).